A 380-amino-acid chain; its full sequence is GDP-mannose:cellobiosyl-diphosphopolyprenol alpha-mannosyltransferase (380 aa).

The protein belongs to the glycosyltransferase group 1 family. Glycosyltransferase 4 subfamily.

The catalysed reaction is beta-D-Glc-(1-&gt;4)-alpha-D-Glc-di-trans,octa-cis-undecaprenyl diphosphate + GDP-alpha-D-mannose = alpha-D-Man-(1-&gt;3)-beta-D-Glc-(1-&gt;4)-alpha-D-Glc-1-di-trans,octa-cis-undecaprenyl diphosphate + GDP + H(+). Its function is as follows. Involved in the biosynthesis of the exopolysaccharide xanthan, a polymer that is comprised of repeating pentasaccharide units with the structure of a beta-(1,4)-linked D-glucose backbone with trisaccharide side chains composed of mannose-beta-(1,4)-glucuronic acid-beta-(1,2)-mannose attached to alternate glucose residues in the backbone by alpha-(1,3) linkages. Xanthan is involved in pathogenicity but has also been used in a variety of applications as a specialty polymer for commercial applications, including food additives, where they act as viscosifying, stabilizing, emulsifying, or gelling agents. This is GDP-mannose:cellobiosyl-diphosphopolyprenol alpha-mannosyltransferase (gumH) from Xanthomonas oryzae pv. oryzae (strain PXO99A).